A 56-amino-acid polypeptide reads, in one-letter code: Large ribosomal subunit protein eL24 (56 aa).

4 residues coordinate Zn(2+): cysteine 6, cysteine 9, cysteine 32, and cysteine 36. The C4-type zinc-finger motif lies at 6–36 (CSFCNTRITPGTGKLYAKKDGTVYYFCSSKC).

It belongs to the eukaryotic ribosomal protein eL24 family. Part of the 50S ribosomal subunit. Forms a cluster with proteins L3 and L14. It depends on Zn(2+) as a cofactor.

Functionally, binds to the 23S rRNA. The chain is Large ribosomal subunit protein eL24 from Methanothrix thermoacetophila (strain DSM 6194 / JCM 14653 / NBRC 101360 / PT) (Methanosaeta thermophila).